The chain runs to 256 residues: Pimeloyl-[acyl-carrier protein] methyl ester esterase (256 aa).

An AB hydrolase-1 domain is found at H15–P242. Residues W22, S82–L83, and F143–Q147 each bind substrate. S82 serves as the catalytic Nucleophile. Active-site residues include D207 and H235. Position 235 (H235) interacts with substrate.

The protein belongs to the AB hydrolase superfamily. Carboxylesterase BioH family. In terms of assembly, monomer.

The protein resides in the cytoplasm. It catalyses the reaction 6-carboxyhexanoyl-[ACP] methyl ester + H2O = 6-carboxyhexanoyl-[ACP] + methanol + H(+). Its pathway is cofactor biosynthesis; biotin biosynthesis. In terms of biological role, the physiological role of BioH is to remove the methyl group introduced by BioC when the pimeloyl moiety is complete. It allows to synthesize pimeloyl-ACP via the fatty acid synthetic pathway through the hydrolysis of the ester bonds of pimeloyl-ACP esters. The protein is Pimeloyl-[acyl-carrier protein] methyl ester esterase of Escherichia coli (strain SMS-3-5 / SECEC).